Here is a 123-residue protein sequence, read N- to C-terminus: Large ribosomal subunit protein eL8 (123 aa).

Belongs to the eukaryotic ribosomal protein eL8 family. Part of the 50S ribosomal subunit. Probably part of the RNase P complex.

It is found in the cytoplasm. Functionally, multifunctional RNA-binding protein that recognizes the K-turn motif in ribosomal RNA, the RNA component of RNase P, box H/ACA, box C/D and box C'/D' sRNAs. The protein is Large ribosomal subunit protein eL8 of Methanobrevibacter smithii (strain ATCC 35061 / DSM 861 / OCM 144 / PS).